We begin with the raw amino-acid sequence, 212 residues long: Ras-related protein Rab-2A (212 aa).

Residue Ala-2 is modified to N-acetylalanine. Positions 2–19 (AYAYLFKYIIIGDTGVGK) are required for interaction with PRKCI. 7 residues coordinate GTP: Gly-16, Val-17, Gly-18, Lys-19, Ser-20, Cys-21, and Thr-38. Position 20 (Ser-20) interacts with Mg(2+). Positions 37–42 (LTIGVE) match the Switch 1 motif. Mg(2+)-binding residues include Thr-38 and Asp-61. A Switch 2 motif is present at residues 63-72 (AGQESFRSIT). 6 residues coordinate GTP: Gly-64, Asn-119, Lys-120, Asp-122, Ala-150, and Lys-151. S-geranylgeranyl cysteine attachment occurs at residues Cys-211 and Cys-212.

This sequence belongs to the small GTPase superfamily. Rab family. Interacts with PRKCI. Interacts with TRIP11. Interacts (in GTP-bound form) with GARIN1B. Interacts (GTP-bound) with HOPS complex component VPS39; interaction contributes to obtaining a functional HOPS complex that promotes autophagosome-lysosome membrane fusion driven by STX17-SNAP29-VAMP8. May interact with VPS41. Mg(2+) serves as cofactor. In terms of processing, prenylated. Prenylation is required for association with cellular membranes. Brain and parietal cells.

The protein localises to the endoplasmic reticulum-Golgi intermediate compartment membrane. Its subcellular location is the melanosome. It is found in the endoplasmic reticulum membrane. The protein resides in the golgi apparatus membrane. It localises to the cytoplasmic vesicle. The protein localises to the secretory vesicle. Its subcellular location is the acrosome. It is found in the autophagosome membrane. It catalyses the reaction GTP + H2O = GDP + phosphate + H(+). Regulated by guanine nucleotide exchange factors (GEFs) which promote the exchange of bound GDP for free GTP, GTPase activating proteins (GAPs) which increase the GTP hydrolysis activity, and GDP dissociation inhibitors (GDIs) which inhibit the dissociation of the nucleotide from the GTPase. The small GTPases Rab are key regulators of intracellular membrane trafficking, from the formation of transport vesicles to their fusion with membranes. Rabs cycle between active GTP-bound and inactive GDP-bound states. In their active state, drive transport of vesicular carriers from donor organelles to acceptor organelles to regulate the membrane traffic that maintains organelle identity and morphology. RAB2A regulates autophagy by promoting autophagosome-lysosome fusion via recruitment of the HOPS endosomal tethering complex; this process involves autophagosomal RAB2A and lysosomal RAB39A recruitment of HOPS subcomplexes VPS39-VPS11 and VPS41-VPS16-VPS18-VPS33A, respectively, which assemble into a functional complex to mediate membrane tethering and SNAREs-driven membrane fusion. Required for protein transport from the endoplasmic reticulum to the Golgi complex. Regulates the compacted morphology of the Golgi. Together with RAB2B, redundantly required for efficient autophagic flux. This chain is Ras-related protein Rab-2A (RAB2A), found in Oryctolagus cuniculus (Rabbit).